A 488-amino-acid chain; its full sequence is UDP-N-acetylmuramate--L-alanine ligase (488 aa).

Position 127–133 (127–133 (GTHGKTT)) interacts with ATP.

It belongs to the MurCDEF family.

The protein resides in the cytoplasm. The catalysed reaction is UDP-N-acetyl-alpha-D-muramate + L-alanine + ATP = UDP-N-acetyl-alpha-D-muramoyl-L-alanine + ADP + phosphate + H(+). The protein operates within cell wall biogenesis; peptidoglycan biosynthesis. In terms of biological role, cell wall formation. The polypeptide is UDP-N-acetylmuramate--L-alanine ligase (Shewanella sp. (strain ANA-3)).